Here is a 413-residue protein sequence, read N- to C-terminus: Variant surface glycoprotein YnAT 1.3 (413 aa).

The N-terminal stretch at 1–22 (MLDNSRARSIVHLLILLKAHVI) is a signal peptide. N-linked (GlcNAc...) asparagine glycans are attached at residues Asn-91, Asn-361, and Asn-379. The GPI-anchor amidated asparagine moiety is linked to residue Asn-379. Positions 380 to 413 (SSNPTSRQNSVVQEPTTVSAAAITPLILPWTLLI) are cleaved as a propeptide — removed in mature form.

The protein resides in the cell membrane. Functionally, VSG forms a coat on the surface of the parasite. The trypanosome evades the immune response of the host by expressing a series of antigenically distinct VSGs from an estimated 1000 VSG genes. The protein is Variant surface glycoprotein YnAT 1.3 of Trypanosoma congolense.